Reading from the N-terminus, the 382-residue chain is GDP-mannose transporter (382 aa).

Topologically, residues 1–40 (MADDKKTNEYTIEMDKLDHGNKDFEAPAPAVRPRGPPVAQ) are cytoplasmic. Residues 41–61 (LANNPILPVLAYCGSSILMTV) traverse the membrane as a helical segment. Residues 62 to 71 (MNKYVLSGRD) are Lumenal-facing. A helical membrane pass occupies residues 72–92 (FNLNFFLLCVQSIVCIVAIQT). At 93–110 (CKVSKLITYRDFNSDEAK) the chain is on the cytoplasmic side. The chain crosses the membrane as a helical span at residues 111-127 (KWFPITLLLIGMIYTGS). The Lumenal segment spans residues 128–134 (KALQYLS). Residues 135 to 151 (IPVYTIFKNLTIILIAY) form a helical membrane-spanning segment. The Cytoplasmic segment spans residues 152-160 (GEVLWFGGS). Residues 161-182 (VTGLTLFSFGLMVLSSIIAAWA) form a helical membrane-spanning segment. Residues 183–200 (DIKHAVESSGDATAKVST) are Lumenal-facing. The helical transmembrane segment at 201 to 221 (LNAGYIWMLINCLCTSSYVLG) threads the bilayer. Residues 222–233 (MRKRIKLTNFKD) lie on the Cytoplasmic side of the membrane. A helical membrane pass occupies residues 234–254 (FDTMFYNNLLSIPVLLVLTFL). The Lumenal segment spans residues 255-274 (MEDWSSANIARNFPSTDRNG). The helical transmembrane segment at 275–295 (ILFAMILSGLSSVFISYTSAW) threads the bilayer. Residues 296–303 (CVRVTSST) lie on the Cytoplasmic side of the membrane. The helical transmembrane segment at 304–324 (TYSMVGALNKLPIALSGLIFF) threads the bilayer. Topologically, residues 325–327 (DAP) are lumenal. The chain crosses the membrane as a helical span at residues 328-348 (VTFPSVSAIVVGFISGIVYAV). The Cytoplasmic portion of the chain corresponds to 349 to 382 (AKIKQSAKPKTGVLPMSNPPVSASSQSMRDSLRS). Positions 358 to 382 (KTGVLPMSNPPVSASSQSMRDSLRS) are disordered. A compositionally biased stretch (polar residues) spans 367 to 382 (PPVSASSQSMRDSLRS).

Belongs to the TPT transporter family. SLC35D subfamily. In terms of assembly, homooligomer.

The protein localises to the golgi apparatus membrane. It localises to the cytoplasmic vesicle membrane. Its subcellular location is the endoplasmic reticulum membrane. In terms of biological role, involved in the import of GDP-mannose from the cytoplasm into the Golgi lumen. The sequence is that of GDP-mannose transporter (gmt1) from Aspergillus fumigatus (strain CBS 144.89 / FGSC A1163 / CEA10) (Neosartorya fumigata).